Reading from the N-terminus, the 530-residue chain is Chaperone Ric-8A (530 aa).

Phosphoserine is present on Ser435. Phosphothreonine occurs at positions 440 and 442. Phosphoserine occurs at positions 501, 522, 523, and 527.

Belongs to the synembryn family. Interacts with GDP-bound G alpha proteins GNAI1, GNAO1 and GNAQ, and with GNA13 with lower affinity. Does not interact with G-alpha proteins when they are in complex with subunits beta and gamma. Interacts (via C-terminus) with RGS14; the interaction stimulates the dissociation of the complex between RGS14 and the active GTP-bound form of GNAI1. Interacts with NCS1; interaction is favored in the absence of Ca(2+) and myristoylation of NCS1 is not required. In terms of tissue distribution, expressed in neurons and neurites of the CA1 and CA2 subregions of the hippocampus (at protein level). In adult brain, it is expressed in the neocortex, hippocampus and cerebellum as well as in the pineal gland and ependymal layer.

Its subcellular location is the cytoplasm. The protein localises to the cell cortex. In terms of biological role, chaperone that specifically binds and folds nascent G alpha proteins prior to G protein heterotrimer formation, promoting their stability and activity: folds GNAI1, GNAO1, GNA13 and GNAQ. Does not fold G(s) G-alpha proteins GNAS nor GNAL. Also acts as a guanine nucleotide exchange factor (GEF) for G alpha proteins by stimulating exchange of bound GDP for free GTP. Involved in regulation of microtubule pulling forces during mitotic movement of chromosomes by stimulating G(i)-alpha protein (GNAI1), possibly leading to release G(i)-alpha-GTP and NuMA proteins from the NuMA-GPSM2-G(i)-alpha-GDP complex. Also acts as an activator for G(q)-alpha (GNAQ) protein by enhancing the G(q)-coupled receptor-mediated ERK activation. This Mus musculus (Mouse) protein is Chaperone Ric-8A.